Here is a 479-residue protein sequence, read N- to C-terminus: 5-hydroxytryptamine receptor 2B (479 aa).

Residues 1–55 are Extracellular-facing; the sequence is MASSYKMSEQSTISEHILQKTCDHLILTDRSGLKAESAAEEMKQTAENQGNTVHW. The helical transmembrane segment at 56-78 threads the bilayer; sequence AALLIFAVIIPTIGGNILVILAV. Residues 79 to 89 are Cytoplasmic-facing; it reads SLEKRLQYATN. A helical membrane pass occupies residues 90–112; it reads YFLMSLAVADLLVGLFVMPIALL. Residues 113-128 are Extracellular-facing; that stretch reads TIMFEATWPLPLALCP. C127 and C206 are disulfide-bonded. Residues 129-150 traverse the membrane as a helical segment; that stretch reads AWLFLDVLFSTASIMHLCAISL. D134 and T139 together coordinate ergotamine. The DRY motif; important for ligand-induced conformation changes signature appears at 151–153; it reads DRY. Residues 151-170 are Cytoplasmic-facing; it reads DRYIAIKKPIQANQCNSRTT. Residues 171–191 traverse the membrane as a helical segment; that stretch reads AFVKITVVWLISIGIAIPVPI. Over 192–215 the chain is Extracellular; it reads KGIEADVVNAHNITCELTKDRFGS. Residue N203 is glycosylated (N-linked (GlcNAc...) asparagine). L208 contributes to the ergotamine binding site. Positions 211–214 match the [DE]RFG motif; may stabilize a conformation that preferentially activates signaling via beta-arrestin family members motif; that stretch reads DRFG. The chain crosses the membrane as a helical span at residues 216–238; it reads FMLFGSLAAFFAPLTIMIVTYFL. The Cytoplasmic portion of the chain corresponds to 239 to 323; the sequence is TIHALRKKAY…TISNEQRASK (85 aa). A helical transmembrane segment spans residues 324–344; sequence VLGIVFLFFLLMWCPFFITNV. The Extracellular portion of the chain corresponds to 345–359; it reads TLALCDSCNQTTLKT. Residues C349 and C352 are joined by a disulfide bond. An N-linked (GlcNAc...) asparagine glycan is attached at N353. Residues 360–381 form a helical membrane-spanning segment; that stretch reads LLQIFVWVGYVSSGVNPLIYTL. The short motif at 375–379 is the NPxxY motif; important for ligand-induced conformation changes and signaling element; that stretch reads NPLIY. Residues 382–479 are Cytoplasmic-facing; that stretch reads FNKTFREAFG…DKVEDQVSYI (98 aa). C396 is lipidated: S-palmitoyl cysteine. The PDZ-binding signature appears at 477–479; it reads SYI.

Belongs to the G-protein coupled receptor 1 family. As to quaternary structure, interacts (via C-terminus) with MPDZ. In terms of tissue distribution, stomach fundus.

Its subcellular location is the cell membrane. It localises to the synapse. The protein localises to the synaptosome. Its function is as follows. G-protein coupled receptor for 5-hydroxytryptamine (serotonin). Also functions as a receptor for various ergot alkaloid derivatives and psychoactive substances. Ligand binding causes a conformation change that triggers signaling via guanine nucleotide-binding proteins (G proteins) and modulates the activity of downstream effectors. HTR2B is coupled to G(q)/G(11) G alpha proteins and activates phospholipase C-beta, releasing diacylglycerol (DAG) and inositol 1,4,5-trisphosphate (IP3) second messengers that modulate the activity of phosphatidylinositol 3-kinase and promote the release of Ca(2+) ions from intracellular stores, respectively. Beta-arrestin family members inhibit signaling via G proteins and mediate activation of alternative signaling pathways. Plays a role in the regulation of dopamine and 5-hydroxytryptamine release, 5-hydroxytryptamine uptake and in the regulation of extracellular dopamine and 5-hydroxytryptamine levels, and thereby affects neural activity. May play a role in the perception of pain. Plays a role in the regulation of behavior, including impulsive behavior. Required for normal proliferation of embryonic cardiac myocytes and normal heart development. Protects cardiomyocytes against apoptosis. Plays a role in the adaptation of pulmonary arteries to chronic hypoxia. Plays a role in vasoconstriction. Required for normal osteoblast function and proliferation, and for maintaining normal bone density. Required for normal proliferation of the interstitial cells of Cajal in the intestine. The chain is 5-hydroxytryptamine receptor 2B (Htr2b) from Rattus norvegicus (Rat).